The chain runs to 142 residues: Tol-Pal system protein TolR (142 aa).

Topologically, residues methionine 1–asparagine 17 are cytoplasmic. Residues isoleucine 18 to isoleucine 38 traverse the membrane as a helical segment. The Periplasmic portion of the chain corresponds to isoleucine 39–isoleucine 142.

This sequence belongs to the ExbD/TolR family. As to quaternary structure, the Tol-Pal system is composed of five core proteins: the inner membrane proteins TolA, TolQ and TolR, the periplasmic protein TolB and the outer membrane protein Pal. They form a network linking the inner and outer membranes and the peptidoglycan layer.

It is found in the cell inner membrane. Part of the Tol-Pal system, which plays a role in outer membrane invagination during cell division and is important for maintaining outer membrane integrity. Required, with TolQ, for the proton motive force-dependent activation of TolA and for TolA-Pal interaction. The chain is Tol-Pal system protein TolR from Escherichia coli O157:H7.